Consider the following 177-residue polypeptide: Large ribosomal subunit protein uL6 (177 aa).

It belongs to the universal ribosomal protein uL6 family. In terms of assembly, part of the 50S ribosomal subunit.

This protein binds to the 23S rRNA, and is important in its secondary structure. It is located near the subunit interface in the base of the L7/L12 stalk, and near the tRNA binding site of the peptidyltransferase center. In Janthinobacterium sp. (strain Marseille) (Minibacterium massiliensis), this protein is Large ribosomal subunit protein uL6.